The sequence spans 162 residues: Onchocystatin (162 aa).

The signal sequence occupies residues 1–32 (MLTIKDGTLLIHLLLFSVVALVQLQGAKSARA). The disordered stretch occupies residues 30–54 (ARAKNPSKMESKTGENQDRPVLLGG). The segment covering 36 to 47 (SKMESKTGENQD) has biased composition (basic and acidic residues). The Secondary area of contact motif lies at 97-101 (QVVAG). A disulfide bond links cysteine 115 and cysteine 128.

Belongs to the cystatin family. Expressed in the cuticle of L3 and L4 larvae, female adult, and in the eggshell of developing microfilariae.

Functionally, cysteine protease inhibitor which inhibits members of the peptidase C1 family. In the human host, inhibits CTSL/cathepsin L and CTSS/cathepsin S and to a lesser extent CTSB/cathepsin B which may cause defects in antigen processing and thereby impair antigen-driven T cell proliferation. This chain is Onchocystatin, found in Onchocerca volvulus.